The chain runs to 297 residues: Large ribosomal subunit protein uL18 (297 aa).

The protein belongs to the universal ribosomal protein uL18 family. In terms of assembly, component of the large ribosomal subunit (LSU).

The protein localises to the cytoplasm. The protein resides in the nucleus. Its function is as follows. Component of the ribosome, a large ribonucleoprotein complex responsible for the synthesis of proteins in the cell. The small ribosomal subunit (SSU) binds messenger RNAs (mRNAs) and translates the encoded message by selecting cognate aminoacyl-transfer RNA (tRNA) molecules. The large subunit (LSU) contains the ribosomal catalytic site termed the peptidyl transferase center (PTC), which catalyzes the formation of peptide bonds, thereby polymerizing the amino acids delivered by tRNAs into a polypeptide chain. The nascent polypeptides leave the ribosome through a tunnel in the LSU and interact with protein factors that function in enzymatic processing, targeting, and the membrane insertion of nascent chains at the exit of the ribosomal tunnel. This Lysiphlebus testaceipes (Greenbugs aphid parastoid) protein is Large ribosomal subunit protein uL18 (RpL5).